We begin with the raw amino-acid sequence, 235 residues long: Urease accessory protein UreF (235 aa).

It belongs to the UreF family. In terms of assembly, ureD, UreF and UreG form a complex that acts as a GTP-hydrolysis-dependent molecular chaperone, activating the urease apoprotein by helping to assemble the nickel containing metallocenter of UreC. The UreE protein probably delivers the nickel.

It is found in the cytoplasm. In terms of biological role, required for maturation of urease via the functional incorporation of the urease nickel metallocenter. The protein is Urease accessory protein UreF of Haemophilus influenzae (strain 86-028NP).